A 1273-amino-acid chain; its full sequence is ABC transporter B family member 2 (1273 aa).

The signal sequence occupies residues 1–30 (MYISLIFFLSNHFPPLISIPIFIFLSFSSP). 7 helical membrane-spanning segments follow: residues 66 to 86 (FSFADFYDCVLMTLGSVGACI), 91 to 111 (VPIFFIFFGKLINIIGLAYLF), 126 to 146 (FVYLSVAILFSSWLEVACWMH), 209 to 229 (FIAGFAIGFTSVWQISLVTLS), 230 to 250 (IVPLIALAGGIYAFVAIGLIA), 305 to 325 (GLGLGSMHCVLFLSWALLVWF), and 345 to 365 (LNVVIAGLSLGQAAPDISAFV). The region spanning 77–366 (MTLGSVGACI…AAPDISAFVR (290 aa)) is the ABC transmembrane type-1 1 domain. One can recognise an ABC transporter 1 domain in the interval 401-637 (IQFKDATFSY…PDGAYSSLLR (237 aa)). An ATP-binding site is contributed by 436–443 (GGSGSGKS). 2 N-linked (GlcNAc...) asparagine glycosylation sites follow: N466 and N651. The region spanning 710–997 (GVCGTICAFI…TLALAPDLLK (288 aa)) is the ABC transmembrane type-1 2 domain. Helical transmembrane passes span 711 to 731 (VCGTICAFIAGSQMPLFALGV) and 752 to 772 (IAILFCCASVITLIVYTIEHI). The N-linked (GlcNAc...) asparagine glycan is linked to N806. 3 helical membrane-spanning segments follow: residues 832-852 (ILLQNLGLVVTSFIIAFILNW), 934-954 (IAGLFYGVSQFFIFSSYGLAL), and 975-995 (FMVLIVTALAMGETLALAPDL). Residues 1030–1266 (IELKGVHFSY…KSGPYFKLIS (237 aa)) form the ABC transporter 2 domain. 1065–1072 (GQSGSGKS) serves as a coordination point for ATP. N-linked (GlcNAc...) asparagine glycans are attached at residues N1217 and N1256.

The protein belongs to the ABC transporter superfamily. ABCB family. Multidrug resistance exporter (TC 3.A.1.201) subfamily. In terms of assembly, interacts with 1-naphthylphthalamic acid (NPA).

It is found in the membrane. In Arabidopsis thaliana (Mouse-ear cress), this protein is ABC transporter B family member 2 (ABCB2).